Consider the following 353-residue polypeptide: MRLVLDAMGGDHAPAAPVEGGVLFARAHPGHEVLLVGDEAKVAPLLGKLRPPSNLQVHHASEVVEMDEHASTAFRRKRDSSLRVGFELVRDGRAEALVSAGNSGAVMAGGLLTLGRLPGVERPAIAALFPALKGGGRCLLLDAGANVDCKPTHLAQFAVMGEAYVRARMGVARPRVAVLSNGEESSKGTPLTREASGLLRRSDLDFVGYVEGKDLFSGEVQVVVTDGFTGNVVLKTSEGVGMGVIGMLRQAIERRGGLAEKVGAMLLQPALAGLRRVVDYAEYGGAPLLGIQGVGIVAHGRSTPRALFNALGAALAMAEGGVQAELTRCIGRAAAWLPTHPKGKRATDAGVSD.

It belongs to the PlsX family. Homodimer. Probably interacts with PlsY.

It localises to the cytoplasm. It carries out the reaction a fatty acyl-[ACP] + phosphate = an acyl phosphate + holo-[ACP]. Its pathway is lipid metabolism; phospholipid metabolism. Its function is as follows. Catalyzes the reversible formation of acyl-phosphate (acyl-PO(4)) from acyl-[acyl-carrier-protein] (acyl-ACP). This enzyme utilizes acyl-ACP as fatty acyl donor, but not acyl-CoA. This is Phosphate acyltransferase from Myxococcus xanthus (strain DK1622).